We begin with the raw amino-acid sequence, 88 residues long: Bombyxin B-8 (88 aa).

Residues 1 to 18 form the signal peptide; the sequence is MKTSVIFVLIVLNLMWSG. Intrachain disulfides connect cysteine 28-cysteine 74, cysteine 40-cysteine 87, and cysteine 73-cysteine 78. Residues 47–65 constitute a propeptide, c peptide like; that stretch reads GGAQYAPYFWQKAYLGSRG.

Belongs to the insulin family. Heterodimer of a B chain and an A chain linked by two disulfide bonds.

It localises to the secreted. Functionally, brain peptide responsible for activation of prothoracic glands to produce ecdysone in insects. This chain is Bombyxin B-8 (BBXB8), found in Bombyx mori (Silk moth).